The following is a 92-amino-acid chain: Small ribosomal subunit protein uS19c (92 aa).

Belongs to the universal ribosomal protein uS19 family.

The protein localises to the plastid. The protein resides in the chloroplast. Its function is as follows. Protein S19 forms a complex with S13 that binds strongly to the 16S ribosomal RNA. The chain is Small ribosomal subunit protein uS19c (rps19) from Anthoceros angustus (Hornwort).